A 229-amino-acid polypeptide reads, in one-letter code: Complex I assembly factor TMEM126B, mitochondrial (229 aa).

The next 4 helical transmembrane spans lie at 71–91, 109–129, 140–160, and 198–218; these read IRGT…ANLV, LTTL…TDAL, VLRS…ALAF, and VPLL…YAVC.

As to quaternary structure, part of the mitochondrial complex I assembly/MCIA complex that comprises at least the core subunits TMEM126B, NDUFAF1, ECSIT and ACAD9 and complement subunits such as COA1 and TMEM186. Associates with the intermediate 370 kDa subcomplex of incompletely assembled complex I. Interacts with TMEM70.

The protein localises to the mitochondrion membrane. Functionally, as part of the MCIA complex, involved in the assembly of the mitochondrial complex I. Participates in constructing the membrane arm of complex I. The polypeptide is Complex I assembly factor TMEM126B, mitochondrial (Rattus norvegicus (Rat)).